A 375-amino-acid polypeptide reads, in one-letter code: Protein NDRG3 (375 aa).

The tract at residues 326-375 (RSRTHSASSSGSMEIPRSRSHTSNAQLKSSSNNSLSNQIQETPQTIELSC) is disordered. Residues 348-363 (SNAQLKSSSNNSLSNQ) show a composition bias toward low complexity. Polar residues predominate over residues 364–375 (IQETPQTIELSC).

This sequence belongs to the NDRG family.

The chain is Protein NDRG3 from Xenopus laevis (African clawed frog).